We begin with the raw amino-acid sequence, 544 residues long: Chaperonin GroEL (544 aa).

ATP-binding positions include 30 to 33, Lys-51, 87 to 91, Gly-415, 480 to 482, and Asp-496; these read TLGP, DGTTT, and DAA.

It belongs to the chaperonin (HSP60) family. Forms a cylinder of 14 subunits composed of two heptameric rings stacked back-to-back. Interacts with the co-chaperonin GroES.

It localises to the cytoplasm. It catalyses the reaction ATP + H2O + a folded polypeptide = ADP + phosphate + an unfolded polypeptide.. Functionally, together with its co-chaperonin GroES, plays an essential role in assisting protein folding. The GroEL-GroES system forms a nano-cage that allows encapsulation of the non-native substrate proteins and provides a physical environment optimized to promote and accelerate protein folding. The chain is Chaperonin GroEL from Sulfurihydrogenibium sp. (strain YO3AOP1).